We begin with the raw amino-acid sequence, 234 residues long: Zinc finger FYVE domain-containing protein 21 (234 aa).

The FYVE-type zinc-finger motif lies at 44–104 (DKECPRCMQC…QCADCALVSH (61 aa)). Zn(2+) is bound by residues Cys-50, Cys-53, Cys-66, Cys-69, Cys-74, Cys-77, Cys-96, and Cys-99. Residues 107-234 (AEFYDKQLKV…TKLLYESRDQ (128 aa)) are PH-like.

As to quaternary structure, interacts with PTK2/FAK1. As to expression, widely expressed.

It localises to the cell junction. The protein localises to the focal adhesion. It is found in the cytoplasmic vesicle. Its subcellular location is the endosome. Its function is as follows. Plays a role in cell adhesion, and thereby in cell motility which requires repeated formation and disassembly of focal adhesions. Regulates microtubule-induced PTK2/FAK1 dephosphorylation, an event important for focal adhesion disassembly, as well as integrin beta-1/ITGB1 cell surface expression. This chain is Zinc finger FYVE domain-containing protein 21 (Zfyve21), found in Mus musculus (Mouse).